The following is a 211-amino-acid chain: Peptidyl-prolyl cis-trans isomerase FKBP14 (211 aa).

Positions 1–19 (MRFFLWNAILALWVTVLSG) are cleaved as a signal peptide. A disulfide bridge connects residues Cys38 and Cys96. One can recognise a PPIase FKBP-type domain in the interval 45 to 135 (GDLMLVHYEG…IFNIDLLEIR (91 aa)). The 36-residue stretch at 135–170 (RNGPRSHESFQEMDLNDDWRLSKHEVKVYLQKEFEK) folds into the EF-hand 1 domain. Positions 148, 150, 152, 154, and 159 each coordinate Ca(2+). A glycan (N-linked (GlcNAc...) asparagine) is linked at Asn176. In terms of domain architecture, EF-hand 2 spans 179 to 211 (HHDALVEDIFDKEDEDKDGFISAREFTYVHDEL). 4 residues coordinate Ca(2+): Asp192, Asp194, Asp196, and Glu203. Positions 208–211 (HDEL) match the Prevents secretion from ER motif.

As to quaternary structure, monomer. Homodimer. Interacts with type III, type IV and type X collagens.

The protein resides in the endoplasmic reticulum lumen. The enzyme catalyses [protein]-peptidylproline (omega=180) = [protein]-peptidylproline (omega=0). With respect to regulation, inhibited by tacrolimus/FK506. Its function is as follows. PPIase which accelerates the folding of proteins during protein synthesis. Has a preference for substrates containing 4-hydroxylproline modifications, including type III collagen. May also target type VI and type X collagens. This Mus musculus (Mouse) protein is Peptidyl-prolyl cis-trans isomerase FKBP14 (Fkbp14).